A 125-amino-acid polypeptide reads, in one-letter code: Small ribosomal subunit protein eS8 (125 aa).

It belongs to the eukaryotic ribosomal protein eS8 family. As to quaternary structure, part of the 30S ribosomal subunit.

This chain is Small ribosomal subunit protein eS8, found in Methanosarcina acetivorans (strain ATCC 35395 / DSM 2834 / JCM 12185 / C2A).